Here is a 310-residue protein sequence, read N- to C-terminus: Dopamine receptor-interacting protein 1 (310 aa).

Interacts with DRD1.

Could be a regulator of the dopamine receptor signaling pathway. The chain is Dopamine receptor-interacting protein 1 from Homo sapiens (Human).